A 27-amino-acid chain; its full sequence is uncharacterized protein (27 aa).

Its subcellular location is the plastid. The protein resides in the chloroplast. This is an uncharacterized protein from Trieres chinensis (Marine centric diatom).